A 316-amino-acid chain; its full sequence is Retinol dehydrogenase 12 (316 aa).

NADP(+) is bound at residue 46–52 (GANTGIG). Residue serine 175 coordinates substrate. Tyrosine 200 serves as the catalytic Proton acceptor.

This sequence belongs to the short-chain dehydrogenases/reductases (SDR) family. Expressed in the inner segments of the photoreceptor in retina.

It carries out the reaction all-trans-retinol + NADP(+) = all-trans-retinal + NADPH + H(+). The catalysed reaction is 11-cis-retinol + NADP(+) = 11-cis-retinal + NADPH + H(+). It catalyses the reaction 9-cis-retinol + NADP(+) = 9-cis-retinal + NADPH + H(+). The enzyme catalyses a 4-hydroxynonen-1-ol + NADP(+) = a 4-hydroxynonenal + NADPH + H(+). It carries out the reaction (E)-non-2-en-1-ol + NADP(+) = (E)-non-2-enal + NADPH + H(+). The catalysed reaction is (Z)-non-6-en-1-ol + NADP(+) = (Z)-non-6-enal + NADPH + H(+). It catalyses the reaction nonan-1-ol + NADP(+) = nonanal + NADPH + H(+). Its pathway is cofactor metabolism; retinol metabolism. Retinoids dehydrogenase/reductase with a clear preference for NADP. Displays high activity towards 9-cis, 11-cis and all-trans-retinal. Shows very weak activity toward 13-cis-retinol. Also exhibits activity, albeit with lower affinity than for retinaldehydes, towards lipid peroxidation products (C9 aldehydes) such as 4-hydroxynonenal and trans-2-nonenal. Plays an important function in photoreceptor cells to detoxify 4-hydroxynonenal and potentially other toxic aldehyde products resulting from lipid peroxidation. Has no dehydrogenase activity towards steroids. This is Retinol dehydrogenase 12 (Rdh12) from Mus musculus (Mouse).